The chain runs to 1388 residues: Putative ATP-dependent RNA helicase DHX57 (1388 aa).

A compositionally biased stretch (basic residues) spans 1–11 (MSSSVRRKGKP). Disordered regions lie at residues 1–107 (MSSS…MTSE) and 121–154 (EQGA…AGQE). A compositionally biased stretch (gly residues) spans 34-51 (HGGGGGGGGSCGGGGGGS). The segment covering 79 to 89 (DSNKSKGETRP) has biased composition (basic and acidic residues). Phosphoserine occurs at positions 128 and 133. Residues 175 to 220 (PVPECAVSPLAVQKLSRYGFHTEHCQLALRICDGDLGAALEHLLRQ) form the UBA domain. A C3H1-type zinc finger spans residues 299–326 (DTSPETCKFYLKGNCKFGSKCKFKHEVP). The residue at position 475 (serine 475) is a Phosphoserine. Positions 555–722 (LKLLSKHQVV…FSYCPVITIP (168 aa)) constitute a Helicase ATP-binding domain. 568 to 575 (GMTGCGKT) is a binding site for ATP. The DEVH box signature appears at 669–672 (DEVH). One can recognise a Helicase C-terminal domain in the interval 832–1012 (LIEALLEWIV…QLCLRIKILE (181 aa)).

The protein belongs to the DEAD box helicase family. DEAH subfamily.

The enzyme catalyses ATP + H2O = ADP + phosphate + H(+). Its function is as follows. Probable ATP-binding RNA helicase. This Mus musculus (Mouse) protein is Putative ATP-dependent RNA helicase DHX57 (Dhx57).